The sequence spans 483 residues: Glutamyl-tRNA(Gln) amidotransferase subunit A (483 aa).

Residues K76 and S151 each act as charge relay system in the active site. Residue S175 is the Acyl-ester intermediate of the active site.

The protein belongs to the amidase family. GatA subfamily. Heterotrimer of A, B and C subunits.

It catalyses the reaction L-glutamyl-tRNA(Gln) + L-glutamine + ATP + H2O = L-glutaminyl-tRNA(Gln) + L-glutamate + ADP + phosphate + H(+). Its function is as follows. Allows the formation of correctly charged Gln-tRNA(Gln) through the transamidation of misacylated Glu-tRNA(Gln) in organisms which lack glutaminyl-tRNA synthetase. The reaction takes place in the presence of glutamine and ATP through an activated gamma-phospho-Glu-tRNA(Gln). This is Glutamyl-tRNA(Gln) amidotransferase subunit A from Pseudomonas savastanoi pv. phaseolicola (strain 1448A / Race 6) (Pseudomonas syringae pv. phaseolicola (strain 1448A / Race 6)).